Here is a 146-residue protein sequence, read N- to C-terminus: 2S sulfur-rich seed storage protein 1 (146 aa).

Residues 1 to 22 (MAKISVAAAALLVLMALGHATA) form the signal peptide. Positions 23 to 36 (FRATVTTTVVEEEN) are excised as a propeptide. Q37 bears the Pyrrolidone carboxylic acid mark. 4 disulfide bridges follow: C40–C92, C53–C81, C82–C130, and C94–C137. Positions 65 to 69 (PYQTM) are excised as a propeptide. The propeptide occupies 143–146 (IAGF).

It belongs to the 2S seed storage albumins family. In terms of assembly, the mature protein consists of a small and a large chain linked by disulfide bonds.

This is a 2S seed storage protein. This is 2S sulfur-rich seed storage protein 1 (BE2S1) from Bertholletia excelsa (Brazil nut).